Consider the following 357-residue polypeptide: MEVVEVLHMNGGNGDSSYANNSLVQQKVILMTKPITEQAMIDLYSSLFPETLCIADLGCSLGANTFLVVSQLVKIVEKERKKHGFKSPEFYFHFNDLPGNDFNTLFQSLGAFQEDLRKHIGESFGPCFFSGVPGSFYTRLFPSKSLHFVYSSYSLMWLSQVPNGIENNKGNIYMARTSPLSVIKAYYKQYEIDFSNFLKYRSEELMKGGKMVLTLLGRESEDPTSKECCYIWELLAMALNKLVEEGLIKEEKVDAFNIPQYTPSPAEVKYIVEKEGSFTINRLETSRVHWNASNNEKNGGYNVSRCMRAVAEPLLVSHFDKELMDLVFHKYEEIISDCMSKEKTEFINVIVSLTKIN.

Position 18 (Y18) interacts with S-adenosyl-L-homocysteine. Residue Q25 coordinates benzoate. The S-adenosyl-L-homocysteine site is built by C59, N64, D96, L97, S135, and F136. W157 is a benzoate binding site. 4 residues coordinate Mg(2+): N168, D254, F256, and N257. Q260 is a benzoate binding site.

The protein belongs to the methyltransferase superfamily. Type-7 methyltransferase family. Predominantly expressed in petal limbs and tubes of corollas.

The enzyme catalyses benzoate + S-adenosyl-L-methionine = methyl benzoate + S-adenosyl-L-homocysteine. It catalyses the reaction salicylate + S-adenosyl-L-methionine = methyl salicylate + S-adenosyl-L-homocysteine. It functions in the pathway aromatic compound metabolism. Converts benzoic acid into the volatile ester methyl benzoates. This scent, mostly produced in a rhythmical, diurnal manner, attracts the pollinators. The polypeptide is S-adenosyl-L-methionine:benzoic acid/salicylic acid carboxyl methyltransferase 2 (Petunia hybrida (Petunia)).